The following is a 544-amino-acid chain: Inward rectifier potassium channel irk-1 (544 aa).

Over Met1 to Trp109 the chain is Cytoplasmic. The helical transmembrane segment at Arg110–Ile134 threads the bilayer. Residues Ala135–Ser158 lie on the Extracellular side of the membrane. The helical; Pore-forming intramembrane region spans Val159–His170. An intramembrane region (pore-forming) is located at residues His171–His177. The Selectivity filter motif lies at Thr172–His177. Residues Arg178–Leu186 are Extracellular-facing. Residues Ala187–Ile208 form a helical membrane-spanning segment. Residues Val209–Thr544 are Cytoplasmic-facing. Disordered regions lie at residues His411–Val448 and Leu512–Val533. Residues Asn438 to Val448 show a composition bias toward polar residues.

It belongs to the inward rectifier-type potassium channel (TC 1.A.2.1) family. As to expression, expressed in neurons in the head and tail with no expression detected in non-neuronal cells in these regions. Also detected in the egg-laying system of adult hermaphordites with strong expression in the HSN motor neurons and weak expression in vulval muscles.

Its subcellular location is the membrane. The protein localises to the perikaryon. It is found in the cell projection. In terms of biological role, inward rectifier potassium channels are characterized by a greater tendency to allow potassium to flow into the cell rather than out of it. Required for modulation of the activity of the hermaphrodite-specific neurons (HSNs) by the G-protein coupled neuropeptide receptor egl-6 which in turn controls egg-laying behavior. The polypeptide is Inward rectifier potassium channel irk-1 (irk-1) (Caenorhabditis elegans).